Here is a 248-residue protein sequence, read N- to C-terminus: ATP synthase subunit a (248 aa).

Helical transmembrane passes span 31 to 51, 90 to 110, 129 to 149, 195 to 215, and 216 to 236; these read GQVL…VLLG, VPYV…GNLF, INTT…AGIS, VIAV…MILF, and LFTG…YIGE.

The protein belongs to the ATPase A chain family. As to quaternary structure, F-type ATPases have 2 components, CF(1) - the catalytic core - and CF(0) - the membrane proton channel. CF(1) has five subunits: alpha(3), beta(3), gamma(1), delta(1), epsilon(1). CF(0) has four main subunits: a, b, b' and c.

It localises to the cellular thylakoid membrane. In terms of biological role, key component of the proton channel; it plays a direct role in the translocation of protons across the membrane. The polypeptide is ATP synthase subunit a (Synechococcus sp. (strain JA-3-3Ab) (Cyanobacteria bacterium Yellowstone A-Prime)).